We begin with the raw amino-acid sequence, 274 residues long: Cytochrome c oxidase subunit 3 (274 aa).

The next 7 membrane-spanning stretches (helical) occupy residues 22-42 (PSPWPLGASVACLILTLGGVM), 47-67 (FAAGDIGLPLGLILVLASMLL), 93-113 (GVVLFIVSEILLFFSLFWAFF), 137-157 (PFEVPLLNTIILLTSGCTITV), 170-190 (TILYLILTILLAWMFLGLQWV), 208-228 (FFVATGFHGLHVMIGTIFLTV), and 248-268 (AAIWYWHVVDVIWLFLYVSVY).

It belongs to the cytochrome c oxidase subunit 3 family. Component of the cytochrome c oxidase (complex IV, CIV), a multisubunit enzyme composed of a catalytic core of 3 subunits and several supernumerary subunits. The complex exists as a monomer or a dimer and forms supercomplexes (SCs) in the inner mitochondrial membrane with ubiquinol-cytochrome c oxidoreductase (cytochrome b-c1 complex, complex III, CIII).

The protein localises to the mitochondrion inner membrane. It catalyses the reaction 4 Fe(II)-[cytochrome c] + O2 + 8 H(+)(in) = 4 Fe(III)-[cytochrome c] + 2 H2O + 4 H(+)(out). Functionally, component of the cytochrome c oxidase, the last enzyme in the mitochondrial electron transport chain which drives oxidative phosphorylation. The respiratory chain contains 3 multisubunit complexes succinate dehydrogenase (complex II, CII), ubiquinol-cytochrome c oxidoreductase (cytochrome b-c1 complex, complex III, CIII) and cytochrome c oxidase (complex IV, CIV), that cooperate to transfer electrons derived from NADH and succinate to molecular oxygen, creating an electrochemical gradient over the inner membrane that drives transmembrane transport and the ATP synthase. Cytochrome c oxidase is the component of the respiratory chain that catalyzes the reduction of oxygen to water. Electrons originating from reduced cytochrome c in the intermembrane space (IMS) are transferred via the dinuclear copper A center (CU(A)) of subunit 2 and heme A of subunit 1 to the active site in subunit 1, a binuclear center (BNC) formed by heme A3 and copper B (CU(B)). The BNC reduces molecular oxygen to 2 water molecules using 4 electrons from cytochrome c in the IMS and 4 protons from the mitochondrial matrix. The chain is Cytochrome c oxidase subunit 3 (COX3) from Allomyces macrogynus.